Here is a 346-residue protein sequence, read N- to C-terminus: Sensor protein kinase GraS (346 aa).

Transmembrane regions (helical) follow at residues 15–35 (MNWI…SLID) and 43–63 (LFYI…LTYF). The region spanning 126–332 (EFVHDIKTPV…TVRLIFPLQN (207 aa)) is the Histidine kinase domain.

In terms of assembly, interacts with GraX.

It localises to the cell membrane. It carries out the reaction ATP + protein L-histidine = ADP + protein N-phospho-L-histidine.. Functionally, member of the two-component regulatory system GraR/GraS involved in resistance against cationic antimicrobial peptides (CAMPs). Functions as a sensor protein kinase which phosphorylates GraR through the auxiliary protein GraX. In turn, GraR up-regulates many genes such as adhesins, exoproteins, transporters, toxins, and proteins involved in cell wall synthesis. Down-regulates the expression of many genes involved in RNA and amino acid synthesis or glycolysis. In Staphylococcus aureus (strain bovine RF122 / ET3-1), this protein is Sensor protein kinase GraS (graS).